The primary structure comprises 188 residues: Probable nicotinate-nucleotide adenylyltransferase (188 aa).

Belongs to the NadD family.

The catalysed reaction is nicotinate beta-D-ribonucleotide + ATP + H(+) = deamido-NAD(+) + diphosphate. It participates in cofactor biosynthesis; NAD(+) biosynthesis; deamido-NAD(+) from nicotinate D-ribonucleotide: step 1/1. Functionally, catalyzes the reversible adenylation of nicotinate mononucleotide (NaMN) to nicotinic acid adenine dinucleotide (NaAD). In Listeria monocytogenes serotype 4a (strain HCC23), this protein is Probable nicotinate-nucleotide adenylyltransferase.